A 59-amino-acid polypeptide reads, in one-letter code: Light-harvesting protein B-800-850 alpha chain A (59 aa).

Over 1–11 (MNQARIWTVVK) the chain is Cytoplasmic. A helical transmembrane segment spans residues 12 to 35 (PTVGLPLLLGSVTVIAILVHFAVL). Histidine 31 contributes to the a bacteriochlorophyll binding site. Residues 36-59 (SHTTWFSKYWNGKAAAIESSVNVG) are Periplasmic-facing.

This sequence belongs to the antenna complex alpha subunit family. As to quaternary structure, the core complex is formed by different alpha and beta chains, binding bacteriochlorophyll molecules, and arranged most probably in tetrameric structures disposed around the reaction center. The non-pigmented gamma chains may constitute additional components.

The protein resides in the cell inner membrane. Its function is as follows. Antenna complexes are light-harvesting systems, which transfer the excitation energy to the reaction centers. This Rhodopseudomonas palustris (strain ATCC BAA-98 / CGA009) protein is Light-harvesting protein B-800-850 alpha chain A (pucAA).